The following is a 462-amino-acid chain: NAD-capped RNA hydrolase NUDT12 (462 aa).

ANK repeat units follow at residues 11-40 (EIVT…SLLN), 45-74 (NGWT…DRSI), and 78-98 (SRQT…ANLL). At Lys-185 the chain carries N6-succinyllysine. Residues Cys-284 and Cys-287 each contribute to the Zn(2+) site. Residue Lys-292 is modified to N6-succinyllysine. Residues Cys-302 and Cys-307 each contribute to the Zn(2+) site. Substrate-binding positions include Tyr-318, 354 to 356 (AGF), Glu-370, Glu-374, and Glu-415. One can recognise a Nudix hydrolase domain in the interval 319 to 453 (PRVDPVVIMQ…SRAIAHQLIK (135 aa)). 4 residues coordinate Mg(2+): Ala-354, Glu-370, Glu-374, and Glu-415. The Nudix box signature appears at 355-376 (GFIEPGETIEDAVRREVEEESG). Residues 460–462 (PNL) carry the Microbody targeting signal motif.

The protein belongs to the Nudix hydrolase family. NudC subfamily. As to quaternary structure, homodimer. Homodimerization is essential for its catalytic activity and protein stability. Interacts (via ANK repeats) with BLMH. Mg(2+) is required as a cofactor. It depends on Zn(2+) as a cofactor.

It is found in the cytoplasm. The protein localises to the peroxisome. Its subcellular location is the cytoplasmic granule. The enzyme catalyses a 5'-end NAD(+)-phospho-ribonucleoside in mRNA + H2O = a 5'-end phospho-adenosine-phospho-ribonucleoside in mRNA + beta-nicotinamide D-ribonucleotide + 2 H(+). It catalyses the reaction NAD(+) + H2O = beta-nicotinamide D-ribonucleotide + AMP + 2 H(+). It carries out the reaction NADH + H2O = reduced beta-nicotinamide D-ribonucleotide + AMP + 2 H(+). The catalysed reaction is NADPH + H2O = reduced beta-nicotinamide D-ribonucleotide + adenosine 2',5'-bisphosphate + 2 H(+). Functionally, mRNA decapping enzyme that specifically removes the nicotinamide adenine dinucleotide (NAD) cap from a subset of mRNAs by hydrolyzing the diphosphate linkage to produce nicotinamide mononucleotide (NMN) and 5' monophosphate mRNA. The NAD-cap is present at the 5'-end of some RNAs; in contrast to the canonical N7 methylguanosine (m7G) cap, the NAD cap promotes mRNA decay. Preferentially acts on NAD-capped transcripts in response to nutrient stress. Also acts on free nicotinamide adenine dinucleotide molecules: hydrolyzes NAD(H) into NMN(H) and AMP, and NADPH into NMNH and 2',5'-ADP. May act to regulate the concentration of peroxisomal nicotinamide nucleotide cofactors required for oxidative metabolism in this organelle. Regulates the levels of circadian clock components PER1, PER2, PER3 and CRY2 in the liver. The polypeptide is NAD-capped RNA hydrolase NUDT12 (Macaca fascicularis (Crab-eating macaque)).